Here is a 394-residue protein sequence, read N- to C-terminus: 12-oxophytodienoate reductase 7 (394 aa).

FMN contacts are provided by residues 35 to 37 and Gln110; that span reads PMT. 189–192 is a substrate binding site; that stretch reads HGAH. Residue Tyr194 is the Proton donor of the active site. Arg241 is an FMN binding site. Arg286 contributes to the substrate binding site. Residues Gly324 and 345-346 contribute to the FMN site; that span reads GR. The short motif at 392-394 is the Microbody targeting signal element; it reads SRM.

This sequence belongs to the NADH:flavin oxidoreductase/NADH oxidase family. The cofactor is FMN.

It localises to the peroxisome. The catalysed reaction is (1S,2S)-OPC-8 + NADP(+) = (9S,13S,15Z)-12-oxophyto-10,15-dienoate + NADPH + H(+). It functions in the pathway lipid metabolism; oxylipin biosynthesis. Its function is as follows. Involved in the biosynthesis of jasmonate (JA) and perhaps in biosynthesis or metabolism of other oxylipin signaling moleclules. In vitro, reduces cis(+)-12-oxophytodienoic acid (cis(+)-OPDA) and cis(-)-OPDA to cis(+)-OPC-8:0 and cis(-)-OPC-8:0, respectively. May be required for the spatial and temporal regulation of JA levels during dehiscence of anthers, promoting the stomium degeneration program. Involved in carbohydrate transport underlying normal lodicule function during anthesis. The polypeptide is 12-oxophytodienoate reductase 7 (Oryza sativa subsp. japonica (Rice)).